Here is a 20-residue protein sequence, read N- to C-terminus: IVGGSEATSGQFPYQXSFQD.

The Peptidase S1 domain maps to 1–20 (IVGGSEATSGQFPYQXSFQD). Positions 1–20 (IVGGSEATSGQFPYQXSFQD) are disordered.

It belongs to the peptidase S1 family.

It carries out the reaction Hydrolysis of proteins, with broad specificity for peptide bonds. Native collagen is cleaved about 75% of the length of the molecule from the N-terminus. Low activity on small molecule substrates of both trypsin and chymotrypsin.. Its function is as follows. This enzyme is a serine protease capable of degrading the native triple helix of collagen. This chain is Collagenolytic protease 36 kDa C, found in Paralithodes camtschaticus (Red king crab).